The primary structure comprises 287 residues: 4-hydroxybenzoate octaprenyltransferase (287 aa).

8 helical membrane passes run 23-43 (IGSL…GGTA), 46-66 (GKLL…GCVI), 99-119 (LFVL…AMTI), 141-161 (LPQV…YAAV), 162-182 (GESL…WTVA), 213-233 (LVIG…GDLN), 237-257 (GAYY…QQLI), and 266-286 (FRAF…ILLA).

The protein belongs to the UbiA prenyltransferase family. It depends on Mg(2+) as a cofactor.

It is found in the cell inner membrane. The catalysed reaction is all-trans-octaprenyl diphosphate + 4-hydroxybenzoate = 4-hydroxy-3-(all-trans-octaprenyl)benzoate + diphosphate. Its pathway is cofactor biosynthesis; ubiquinone biosynthesis. In terms of biological role, catalyzes the prenylation of para-hydroxybenzoate (PHB) with an all-trans polyprenyl group. Mediates the second step in the final reaction sequence of ubiquinone-8 (UQ-8) biosynthesis, which is the condensation of the polyisoprenoid side chain with PHB, generating the first membrane-bound Q intermediate 3-octaprenyl-4-hydroxybenzoate. This is 4-hydroxybenzoate octaprenyltransferase from Edwardsiella ictaluri (strain 93-146).